The following is a 577-amino-acid chain: MATAQLYCVCRQPYDVSRFMIECDICKDWFHGSCVEVEEHYAVDIDVYHCPNCDVHHGPSLMKKRRNWHRHDYTEPDDGSKPVQAGTSVFVRELQARTFPSGDEILQPMHGGQVTQRYLERHGFRYPIIVSKREELGLRLPPPDFSIKDVERYVGGNKVIDVIDVARQADSKMKLKAFVKYYYSPQRPKVLNVISLEFSDTKMAELVVVPDIAQKMSWVENYWPDDSYFPKPFVQKYCLMGVKDSYTDFHIDFGGTSVWYHVLWGEKIFYLIKPTPANLALYEEWSSSPNQSEVFFGEKVDKCYKCVVRQGTTLLIPTGWIHAVLTSQDCMAFGGNFLHNLNIGMQLRCYEMERRLKTPDLFKFPYFEAICWYVAKNLLETLKESREENCLPPEYLIKGVKALITALRNWLKREVTEPASEVPDHIRPNHLIKMLTKEIQYLENGNCGNKPMKLQESSICPSTRSAHERGSHARKTARRLRGHHHHHHRHHHHHHHHHHHNHQHSDGPKAPSHLDIYEQHTQEVLKRLEMGPYEEDASFNLKVNGKFNKVSTASAAAAERSLENDLRLVLCNGQIVR.

The PHD-type zinc finger occupies 5 to 56 (QLYCVCRQPYDVSRFMIECDICKDWFHGSCVEVEEHYAVDIDVYHCPNCDVH). Residues 198 to 354 (FSDTKMAELV…MQLRCYEMER (157 aa)) enclose the JmjC domain. Substrate is bound at residue Thr-247. Fe cation is bound by residues His-250 and Asp-252. Lys-267 is a binding site for substrate. His-322 contributes to the Fe cation binding site. A disordered region spans residues 460-513 (CPSTRSAHERGSHARKTARRLRGHHHHHHRHHHHHHHHHHHNHQHSDGPKAPSH). The segment covering 472–502 (HARKTARRLRGHHHHHHRHHHHHHHHHHHNH) has biased composition (basic residues).

Belongs to the JHDM1 histone demethylase family. JHDM1D subfamily. Fe(2+) is required as a cofactor. As to expression, predominantly expressed in brain.

It localises to the nucleus. Functionally, histone demethylase required for brain development. Specifically demethylates dimethylated 'Lys-9' and 'Lys-27' (H3K9me2 and H3K27me2, respectively) of histone H3 and monomethylated histone H4 'Lys-20' residue (H4K20Me1), thereby playing a central role in histone code. The protein is Lysine-specific demethylase 7B (jhdm1db) of Danio rerio (Zebrafish).